Reading from the N-terminus, the 78-residue chain is Conotoxin ba1890.8 (78 aa).

The first 22 residues, 1–22 (MKTSGRLLFLCLAVGLLLESQA), serve as a signal peptide directing secretion. Positions 23–61 (HPIADAEDATRNVGSDGTSVELSEILERGQDSSAEKGQR) are excised as a propeptide. The segment at 25-78 (IADAEDATRNVGSDGTSVELSEILERGQDSSAEKGQRQNDHDVDESGHDIPFPS) is disordered. The span at 34-43 (NVGSDGTSVE) shows a compositional bias: polar residues. Over residues 47–72 (ILERGQDSSAEKGQRQNDHDVDESGH) the composition is skewed to basic and acidic residues. Glutamine 62 bears the Pyrrolidone carboxylic acid mark.

This sequence belongs to the conotoxin H superfamily. As to expression, expressed by the venom duct.

The protein resides in the secreted. Its function is as follows. Probable toxin. The chain is Conotoxin ba1890.8 from Conus bayani (Bayan's cone).